The chain runs to 519 residues: Aldehyde dehydrogenase X, mitochondrial (519 aa).

The N-terminal 19 residues, 1-19, are a transit peptide targeting the mitochondrion; that stretch reads MLTARLLLPRLLCLQGRTT. Residue K53 is modified to N6-acetyllysine. N6-acetyllysine; alternate is present on K54. K54 is modified (N6-succinyllysine; alternate). K83 carries the N6-succinyllysine modification. 264–269 lines the NAD(+) pocket; the sequence is GSTEVG. E287 acts as the Proton acceptor in catalysis. The active-site Nucleophile is the C321. Residues K366, K385, K401, K416, and K428 each carry the N6-acetyllysine; alternate modification. 5 positions are modified to N6-succinyllysine; alternate: K366, K385, K401, K416, and K428. N6-acetyllysine is present on K431.

Belongs to the aldehyde dehydrogenase family. Homotetramer.

The protein localises to the mitochondrion matrix. The enzyme catalyses an aldehyde + NAD(+) + H2O = a carboxylate + NADH + 2 H(+). It participates in alcohol metabolism; ethanol degradation; acetate from ethanol: step 2/2. Its function is as follows. ALDHs play a major role in the detoxification of alcohol-derived acetaldehyde. They are involved in the metabolism of corticosteroids, biogenic amines, neurotransmitters, and lipid peroxidation. This is Aldehyde dehydrogenase X, mitochondrial (Aldh1b1) from Mus musculus (Mouse).